Consider the following 993-residue polypeptide: Type II inositol 1,4,5-trisphosphate 5-phosphatase (993 aa).

Residues 22–148 (QGVLCKGDSR…PEFEWLSRHT (127 aa)) form the PH domain. Composition is skewed to basic and acidic residues over residues 149 to 163 (CAEP…REWN) and 294 to 303 (SKSDMSEKVR). 2 disordered regions span residues 149–191 (CAEP…GLED) and 236–304 (EALE…KVRS). The segment at 342 to 668 (IQNFRFFVGT…LDKMENANIP (327 aa)) is 5-phosphatase. Positions 355 and 383 each coordinate Mg(2+). Residues E383, 459–460 (NK), 582–583 (YK), and 596–598 (KCR) contribute to the substrate site. Positions 669–782 (SVTLSKREFC…LSVSGNYLPS (114 aa)) are ASH. The region spanning 821–993 (SQLENPMEIP…FIHQFLCGPL (173 aa)) is the Rho-GAP domain. Position 990 is a cysteine methyl ester (C990). The S-farnesyl cysteine moiety is linked to residue C990. Residues 991–993 (GPL) constitute a propeptide, removed in mature form.

This sequence belongs to the inositol 1,4,5-trisphosphate 5-phosphatase type II family. As to quaternary structure, interacts with APPL1, PHETA1 and PHETA2. Interacts with several Rab GTPases, at least RAB1A, RAB2A, RAB5A, RAB6A, RAB8A, RAB9A and RAB33B; these interactions may play a dual role in targeting INPP5B to the specific membranes and stimulating its phosphatase activity. Interacts preferentially with non-phosphorylated RAB8A; phosphorylation of RAB8A on 'Thr-72' disrupts this interaction. Interacts with INPP5F. Post-translationally, isoprenylation at Cys-990 may be required for localization at the membrane. In terms of processing, may be proteolytically cleaved after Lys-320 as inferred from N-terminal protein sequence of the 75 kda form. As to expression, detected in kidney, liver, brain, lung and testis (at protein level). Detected in kidney and liver, and at lower levels in brain, lung and testis.

It is found in the cytoplasm. It localises to the cytosol. The protein resides in the endoplasmic reticulum-Golgi intermediate compartment. Its subcellular location is the early endosome membrane. The protein localises to the membrane. It is found in the cytoplasmic vesicle. It localises to the phagosome membrane. It carries out the reaction a 1,2-diacyl-sn-glycero-3-phospho-(1D-myo-inositol-4,5-bisphosphate) + H2O = a 1,2-diacyl-sn-glycero-3-phospho-(1D-myo-inositol 4-phosphate) + phosphate. Its function is as follows. Hydrolyzes phosphatidylinositol 4,5-bisphosphate (PtIns(4,5)P2) and the signaling molecule phosphatidylinositol 1,4,5-trisphosphate (PtIns(1,4,5)P3), and thereby modulates cellular signaling events. The polypeptide is Type II inositol 1,4,5-trisphosphate 5-phosphatase (Inpp5b) (Mus musculus (Mouse)).